A 131-amino-acid polypeptide reads, in one-letter code: Small ribosomal subunit protein uS8 (131 aa).

The protein belongs to the universal ribosomal protein uS8 family. As to quaternary structure, part of the 30S ribosomal subunit. Contacts proteins S5 and S12.

Functionally, one of the primary rRNA binding proteins, it binds directly to 16S rRNA central domain where it helps coordinate assembly of the platform of the 30S subunit. This Bacteroides fragilis (strain ATCC 25285 / DSM 2151 / CCUG 4856 / JCM 11019 / LMG 10263 / NCTC 9343 / Onslow / VPI 2553 / EN-2) protein is Small ribosomal subunit protein uS8.